We begin with the raw amino-acid sequence, 432 residues long: MKKVSVIAAAVAATLAAGSAFAVDFHGYMRAGVGVNADGGQQLTFEKNKVGRLGNESDIYGEIQLGKEVYNNNGKTFYVDSMLAMTSNGSNDWEGTAANCGLDGTKVKCVDDAQFALRQFNVQAKGVLNFAPEATLWAGKRYYQRHDIHISDFYYWNISGAGAGVEGIEAGPGKLSFAWVRNDRNDNFNSGMGSGDTPDVGNGGSVNVNTLDVRYAGIPVWENGSLEVGLDYALVNETEDASKAAKDAKDGVMFTAELTQGLDSGFNKTVFQYGTEGYSKAFAFYGDGSWYGAEARDGASGYRFINWGVIGLGDNWELGHQLVYGVGEDMWAADHKWEAMSAVVRPVFKWDDNHKTIFEAGYAIDDNDGDENKYGKLTVAQAWSAGSSFWARPEIRLYASYLTADKADNSNTFDSGRSDDTFQFGVQAEAWW.

The first 22 residues, 1–22 (MKKVSVIAAAVAATLAAGSAFA), serve as a signal peptide directing secretion.

The protein belongs to the porin LamB (TC 1.B.3) family. As to quaternary structure, homotrimer formed of three 18-stranded antiparallel beta-barrels, containing three independent channels.

Its subcellular location is the cell outer membrane. The catalysed reaction is beta-maltose(in) = beta-maltose(out). Its function is as follows. Involved in the transport of maltose and maltodextrins. The chain is Maltoporin from Vibrio parahaemolyticus serotype O3:K6 (strain RIMD 2210633).